The primary structure comprises 104 residues: Secretoglobin family 3A member 1 (104 aa).

The first 20 residues, Met-1–Ala-20, serve as a signal peptide directing secretion.

This sequence belongs to the secretoglobin family. UGRP subfamily. As to quaternary structure, homodimer; disulfide-linked. As to expression, highly expressed in lung and prostate. Also found in mammary gland, spleen, pancreas, testis and liver. Detected throughout the airway epithelium in lung, with highest expression in large airways. Found in lung submucosal glands where it localizes to acinar and ductile cells. Not detected in respiratory bronchioles, alveolar ducts or alveolar epithelium. In mammary gland, specifically localizes to luminal epithelial cells.

Its subcellular location is the secreted. Its function is as follows. Secreted cytokine-like protein. Inhibits cell growth in vitro. The polypeptide is Secretoglobin family 3A member 1 (SCGB3A1) (Homo sapiens (Human)).